The sequence spans 333 residues: Adenosine deaminase (333 aa).

Zn(2+) is bound by residues His12 and His14. The substrate site is built by His14, Asp16, and Gly170. Position 197 (His197) interacts with Zn(2+). Glu200 functions as the Proton donor in the catalytic mechanism. Asp278 serves as a coordination point for Zn(2+). Asp279 serves as a coordination point for substrate.

The protein belongs to the metallo-dependent hydrolases superfamily. Adenosine and AMP deaminases family. Adenosine deaminase subfamily. Requires Zn(2+) as cofactor.

It carries out the reaction adenosine + H2O + H(+) = inosine + NH4(+). The catalysed reaction is 2'-deoxyadenosine + H2O + H(+) = 2'-deoxyinosine + NH4(+). Catalyzes the hydrolytic deamination of adenosine and 2-deoxyadenosine. This chain is Adenosine deaminase, found in Escherichia coli (strain SE11).